A 468-amino-acid chain; its full sequence is MAKKVEILVVGDLMLDHYIWGSCDRISPEAPVQVVKIAKETHRLGGAGNVVQNLLALGAKVSVASVVGDDEVGLRIKNMLSELGAGGGLILSEKGRESSIKSRVMASHQQVVRIDKESAVKINLESELVQKVTENLKNFSVVLLSDYGKGVLSDKVCRDIINECVRLDIPVLIDPKGNDYSKYKNATLLTPNRKEASEATGIAIKNTIDLRAAIMKLKNELNLKYSIVTLSEEGIALFDKELEIFPAEAKEVFDVTGAGDTVLATLGFMLASKKDIKEAIKMANLAAAVVVAKIGSATANFGEIEELLRSRANAEFEHKIKSAEQVAEILSQRGEKKVVFTNGCFDILHAGHARYLAKARDFGDILIVGLNSDASVRRLKGESRPINSQLDRACVLSGLGFVDYVVIFDEDTPMELIKKLRPDILVKGADYEGKEVVGSDIVKDVRLVEFVDGKSTSAIVKRIKDADK.

Positions 1–315 are ribokinase; that stretch reads MAKKVEILVV…ELLRSRANAE (315 aa). ATP is bound at residue 192–195; it reads NRKE. The active site involves Asp-260. The tract at residues 340-468 is cytidylyltransferase; sequence FTNGCFDILH…IVKRIKDADK (129 aa).

The protein in the N-terminal section; belongs to the carbohydrate kinase PfkB family. This sequence in the C-terminal section; belongs to the cytidylyltransferase family. As to quaternary structure, homodimer.

The enzyme catalyses D-glycero-beta-D-manno-heptose 7-phosphate + ATP = D-glycero-beta-D-manno-heptose 1,7-bisphosphate + ADP + H(+). It carries out the reaction D-glycero-beta-D-manno-heptose 1-phosphate + ATP + H(+) = ADP-D-glycero-beta-D-manno-heptose + diphosphate. It participates in nucleotide-sugar biosynthesis; ADP-L-glycero-beta-D-manno-heptose biosynthesis; ADP-L-glycero-beta-D-manno-heptose from D-glycero-beta-D-manno-heptose 7-phosphate: step 1/4. Its pathway is nucleotide-sugar biosynthesis; ADP-L-glycero-beta-D-manno-heptose biosynthesis; ADP-L-glycero-beta-D-manno-heptose from D-glycero-beta-D-manno-heptose 7-phosphate: step 3/4. In terms of biological role, catalyzes the phosphorylation of D-glycero-D-manno-heptose 7-phosphate at the C-1 position to selectively form D-glycero-beta-D-manno-heptose-1,7-bisphosphate. Its function is as follows. Catalyzes the ADP transfer from ATP to D-glycero-beta-D-manno-heptose 1-phosphate, yielding ADP-D-glycero-beta-D-manno-heptose. This is Bifunctional protein HldE from Campylobacter curvus (strain 525.92).